The following is a 181-amino-acid chain: uncharacterized protein (181 aa).

The N-terminal stretch at 1–23 is a signal peptide; the sequence is MKKCLLFLTTIALILSLSTNAFA.

This is an uncharacterized protein from Bacillus subtilis (strain 168).